A 457-amino-acid chain; its full sequence is Transcription factor PCF7 (457 aa).

A coiled-coil region spans residues 58-84 (STLHYLLQEKERAQQAHEQLQIYQQQQ). Positions 95 to 121 (RQPASRGPGGGGGGGDGGGSSGESTPV) are disordered. A compositionally biased stretch (gly residues) spans 101–115 (GPGGGGGGGDGGGSS). A TCP domain is found at 140 to 198 (RKDRHSKVCTARGLRDRRVRLAAHTAIRFYDVQDRLGYDRPSKAVDWLMRNAKAAIDEL). 2 disordered regions span residues 199-231 (PDRAEAPPPPAAASTEQPEGTEQANSTSYGFGN) and 263-299 (KSLFPSSSTASGAASAGHDEYRGSPPDLLSRTTSNQQ). Over residues 212 to 230 (STEQPEGTEQANSTSYGFG) the composition is skewed to polar residues. Positions 268–278 (SSSTASGAASA) are enriched in low complexity.

In terms of assembly, forms homodimers and heterodimers.

Its subcellular location is the nucleus. Transcription activator. Binds the promoter core sequence 5'-GGNCC-3'. The sequence is that of Transcription factor PCF7 (PCF7) from Oryza sativa subsp. indica (Rice).